The following is a 336-amino-acid chain: Holliday junction branch migration complex subunit RuvB (336 aa).

The segment at 4–184 (ADRLVSADSS…FGIVQRLEFY (181 aa)) is large ATPase domain (RuvB-L). Residues Ile-23, Arg-24, Gly-65, Lys-68, Thr-69, Thr-70, 131 to 133 (EDY), Arg-174, Tyr-184, and Arg-221 contribute to the ATP site. Mg(2+) is bound at residue Thr-69. Residues 185-255 (QIPDLQHIVS…IAAQALDMLN (71 aa)) form a small ATPAse domain (RuvB-S) region. Residues 258 to 336 (AEGFDYMDRK…HFGITPPEMP (79 aa)) are head domain (RuvB-H). Positions 294, 313, and 318 each coordinate DNA.

It belongs to the RuvB family. As to quaternary structure, homohexamer. Forms an RuvA(8)-RuvB(12)-Holliday junction (HJ) complex. HJ DNA is sandwiched between 2 RuvA tetramers; dsDNA enters through RuvA and exits via RuvB. An RuvB hexamer assembles on each DNA strand where it exits the tetramer. Each RuvB hexamer is contacted by two RuvA subunits (via domain III) on 2 adjacent RuvB subunits; this complex drives branch migration. In the full resolvosome a probable DNA-RuvA(4)-RuvB(12)-RuvC(2) complex forms which resolves the HJ.

The protein localises to the cytoplasm. The catalysed reaction is ATP + H2O = ADP + phosphate + H(+). Functionally, the RuvA-RuvB-RuvC complex processes Holliday junction (HJ) DNA during genetic recombination and DNA repair, while the RuvA-RuvB complex plays an important role in the rescue of blocked DNA replication forks via replication fork reversal (RFR). RuvA specifically binds to HJ cruciform DNA, conferring on it an open structure. The RuvB hexamer acts as an ATP-dependent pump, pulling dsDNA into and through the RuvAB complex. RuvB forms 2 homohexamers on either side of HJ DNA bound by 1 or 2 RuvA tetramers; 4 subunits per hexamer contact DNA at a time. Coordinated motions by a converter formed by DNA-disengaged RuvB subunits stimulates ATP hydrolysis and nucleotide exchange. Immobilization of the converter enables RuvB to convert the ATP-contained energy into a lever motion, pulling 2 nucleotides of DNA out of the RuvA tetramer per ATP hydrolyzed, thus driving DNA branch migration. The RuvB motors rotate together with the DNA substrate, which together with the progressing nucleotide cycle form the mechanistic basis for DNA recombination by continuous HJ branch migration. Branch migration allows RuvC to scan DNA until it finds its consensus sequence, where it cleaves and resolves cruciform DNA. In Klebsiella pneumoniae subsp. pneumoniae (strain ATCC 700721 / MGH 78578), this protein is Holliday junction branch migration complex subunit RuvB.